Consider the following 318-residue polypeptide: MRSIWKGSIAFGLVNVPVKVYSATEDHDIKFHQVHAKDNGRIRYKRVCEVCGEVVEYRDINKAFESDDGQMVVITDEDIATLPEERSREIEVVEFIPAEQLDPLMYDKSYFLEPDSKSSKSYVLLAKTLAETDRIAIVHFSLRNKSRLAALRVKDFSKRDVMMIHTLLWPDEIRDPDFPILDKEVQIKPAELKMAGQVVESMTDDFKPDLYHDDYQEQLRELVQAKLEGGEAFSVEEQPAELDEGTEDVSDLLAKLEASVKARKGGKSDSKDDSDSESDSKESKSDSKPAKKAPAKKAAAKKSTAKKAPAKKAAAKKS.

Positions 10-193 constitute a Ku domain; that stretch reads AFGLVNVPVK…EVQIKPAELK (184 aa). A disordered region spans residues 259 to 318; it reads SVKARKGGKSDSKDDSDSESDSKESKSDSKPAKKAPAKKAAAKKSTAKKAPAKKAAAKKS. Positions 266-289 are enriched in basic and acidic residues; the sequence is GKSDSKDDSDSESDSKESKSDSKP. A compositionally biased stretch (basic residues) spans 290–318; sequence AKKAPAKKAAAKKSTAKKAPAKKAAAKKS.

It belongs to the prokaryotic Ku family. Homodimer. Interacts with Sir2 and probably also with LigD; may form a trimeric complex during NHEJ.

Functionally, with LigD forms a non-homologous end joining (NHEJ) repair enzyme which repairs blunt-end and 5'-overhang double strand breaks (DSB) with about 50% fidelity, and DSB with non-complementary 3' ends. Plays a partial role in NHEJ on 3'-overhang repair of complementary ends. NHEJ repairs DSB with blunt ends and 5' overhangs with a high level of nucleotide insertion/deletion, without a need for microhomology. This protein but not LigD also suppresses homologous recombination. Overexpression dramatically increases the efficiency of NHEJ with no effect on repair fidelity. The sequence is that of Non-homologous end joining protein Ku from Mycolicibacterium smegmatis (strain ATCC 700084 / mc(2)155) (Mycobacterium smegmatis).